We begin with the raw amino-acid sequence, 178 residues long: Large ribosomal subunit protein uL6 (178 aa).

Belongs to the universal ribosomal protein uL6 family. In terms of assembly, part of the 50S ribosomal subunit.

This protein binds to the 23S rRNA, and is important in its secondary structure. It is located near the subunit interface in the base of the L7/L12 stalk, and near the tRNA binding site of the peptidyltransferase center. This chain is Large ribosomal subunit protein uL6, found in Streptococcus equi subsp. zooepidemicus (strain H70).